Reading from the N-terminus, the 432-residue chain is MVKLSIVLTPQFLSHDQSQFTKELQQHVKSVTCPCEYLRKVINSLAVYRHRETDFGVGVRDHPGQHGKTPSPQKLDNLIIIIIGFLRRYTFNILFCTSCLCVSFLKTIFWSRNGHDGSMDVQQRAWRSNRSRQKGLRSICMHTKKRVSSFRGNKIGLKDVITLRRHVETKVRAKIRKRKVTTKINRHDKINGKRKTARKQKMFQRAQELRRRAEDYHKCKIPPSARKPLCNWVRMAAAEHRHSSGLPYWLYLTAETLKNRMGRQPPPPTQQHSITDNSLSLKTPPECLLTPLPPSVDDNIKECPLAPLPPSPLPPSVDDNLKECLFVPLPPSPLPPSVDDNLKECLFVPLPPSPLPPSVDDNLKTPPLATQEAEVEKPPKPKRWRVDEVEQSPKPKRQREAEAQQLPKPKRRRLSKLRTRHCTQAWAIRINP.

2 disordered regions span residues 260-280 (RMGR…NSLS) and 353-420 (SPLP…LRTR). Residues 270-280 (QQHSITDNSLS) are compositionally biased toward polar residues. Residues 374 to 402 (EVEKPPKPKRWRVDEVEQSPKPKRQREAE) show a composition bias toward basic and acidic residues. A compositionally biased stretch (basic residues) spans 408-420 (KPKRRRLSKLRTR).

This sequence belongs to the NPIP family.

The polypeptide is Nuclear pore complex-interacting protein family member B9 (NPIPB9) (Homo sapiens (Human)).